The following is a 458-amino-acid chain: MTLPSIAIIGRPNVGKSTLVNRLCQSNDAIVFDKPGVTRDRTYQNASWAGREFQVVDTGGLVFEDDSEFLPEIRTQVFLALEEASLALFVVDGNQGVTDGDLSIAKWLRNSACKTIVAVNKCESTSLGVSLASEFWKLGLGEPYPVSAIHGSGTGDLLDLVIDGFPKDLNVEDKEDKIMMSIIGRPNVGKSSLLNAICGEKRAIVSDISGTTTDSIDTLIKKDSHLWKIVDTAGIRRKKNVKYGTEFFGINRAFKSIDRSDVCVLVIDAIDGVTDQDQKLAGRIEEQGRACVIVVNKWDLVEKNNSTIYQVEKELRSKLYFLHWSKMIFISALTGQRVQNIFEHALSAVTQHRRRVTTSVVNEVLKEALGWKSPPTKRSGKQGRLYYGTQVKNQPPTFTLFVNDPKLFGITYRRYIEKQIRLNLGFEGSPIILLWRGKQQRDLEKETSKKNINIIQKD.

EngA-type G domains are found at residues 4–169 (PSIA…PKDL) and 178–353 (IMMS…TQHR). Residues 10–17 (GRPNVGKS), 57–61 (DTGGL), 120–123 (NKCE), 184–191 (GRPNVGKS), 231–235 (DTAGI), and 296–299 (NKWD) contribute to the GTP site. The 86-residue stretch at 354–439 (RRVTTSVVNE…PIILLWRGKQ (86 aa)) folds into the KH-like domain.

This sequence belongs to the TRAFAC class TrmE-Era-EngA-EngB-Septin-like GTPase superfamily. EngA (Der) GTPase family. In terms of assembly, associates with the 50S ribosomal subunit.

Functionally, GTPase that plays an essential role in the late steps of ribosome biogenesis. The protein is GTPase Der of Prochlorococcus marinus subsp. pastoris (strain CCMP1986 / NIES-2087 / MED4).